The chain runs to 201 residues: Molybdenum cofactor guanylyltransferase (201 aa).

GTP-binding positions include 15-17, lysine 28, aspartate 74, and aspartate 104; that span reads LAG. Aspartate 104 contributes to the Mg(2+) binding site.

The protein belongs to the MobA family. As to quaternary structure, monomer. The cofactor is Mg(2+).

The protein resides in the cytoplasm. The catalysed reaction is Mo-molybdopterin + GTP + H(+) = Mo-molybdopterin guanine dinucleotide + diphosphate. Its function is as follows. Transfers a GMP moiety from GTP to Mo-molybdopterin (Mo-MPT) cofactor (Moco or molybdenum cofactor) to form Mo-molybdopterin guanine dinucleotide (Mo-MGD) cofactor. The protein is Molybdenum cofactor guanylyltransferase of Pseudomonas syringae pv. syringae (strain B728a).